A 110-amino-acid chain; its full sequence is Protein E7 (110 aa).

The segment at 1–47 (MHGPKPTVQEIVLELCPCNEIEPVDLVCHEQLGDSDDEIDEPDHAVN) is E7 terminal domain. Residues 26–30 (LVCHE) carry the LXCXE motif; interaction with host RB1 and TMEM173/STING motif. Residues 69–105 (CCKCNNLLQLVVEASRENLRNVELLFMDSLNFVCPWC) fold into a zinc finger. The Nuclear export signal signature appears at 87-95 (LRNVELLFM).

Belongs to the papillomaviridae E7 protein family. As to quaternary structure, homodimer. Homooligomer. Interacts with host RB1; this interaction induces dissociation of RB1-E2F1 complex thereby disrupting RB1 activity. Interacts with host EP300; this interaction represses EP300 transcriptional activity. Interacts with protein E2; this interaction inhibits E7 oncogenic activity. Interacts with host TMEM173/STING; this interaction impairs the ability of TMEM173/STING to sense cytosolic DNA and promote the production of type I interferon (IFN-alpha and IFN-beta). Highly phosphorylated.

The protein resides in the host cytoplasm. It is found in the host nucleus. In terms of biological role, plays a role in viral genome replication by driving entry of quiescent cells into the cell cycle. Stimulation of progression from G1 to S phase allows the virus to efficiently use the cellular DNA replicating machinery to achieve viral genome replication. E7 protein has both transforming and trans-activating activities. Induces the disassembly of the E2F1 transcription factor from RB1, with subsequent transcriptional activation of E2F1-regulated S-phase genes. Interferes with host histone deacetylation mediated by HDAC1 and HDAC2, leading to transcription activation. Also plays a role in the inhibition of both antiviral and antiproliferative functions of host interferon alpha. Interaction with host TMEM173/STING impairs the ability of TMEM173/STING to sense cytosolic DNA and promote the production of type I interferon (IFN-alpha and IFN-beta). The polypeptide is Protein E7 (Human papillomavirus type ME180).